The chain runs to 389 residues: viridiflorene synthase Agr2 (389 aa).

Positions M1–A15 are cleaved as a signal peptide. D128, N263, S267, and E271 together coordinate Mg(2+). The short motif at D128 to D132 is the DDXXD motif element. Positions 360 and 361 each coordinate (2E,6E)-farnesyl diphosphate.

This sequence belongs to the terpene synthase family. Mg(2+) is required as a cofactor.

It carries out the reaction (2E,6E)-farnesyl diphosphate = viridiflorene + diphosphate. Functionally, terpene cyclase that catalyzes the cyclization of farnesyl diphosphate (FPP) to viridiflorene. This is viridiflorene synthase Agr2 from Cyclocybe aegerita (Black poplar mushroom).